A 315-amino-acid polypeptide reads, in one-letter code: Glycine--tRNA ligase alpha subunit (315 aa).

Belongs to the class-II aminoacyl-tRNA synthetase family. As to quaternary structure, tetramer of two alpha and two beta subunits.

It is found in the cytoplasm. The enzyme catalyses tRNA(Gly) + glycine + ATP = glycyl-tRNA(Gly) + AMP + diphosphate. In Pseudomonas putida (strain ATCC 47054 / DSM 6125 / CFBP 8728 / NCIMB 11950 / KT2440), this protein is Glycine--tRNA ligase alpha subunit.